A 325-amino-acid chain; its full sequence is Bifunctional ligase/repressor BirA (325 aa).

The segment at residues 23–42 (GQKISDALGCSRTAVWKHIE) is a DNA-binding region (H-T-H motif). The 189-residue stretch at 74–262 (RFGLKTEVMG…CFEKRYRDYM (189 aa)) folds into the BPL/LPL catalytic domain. Biotin-binding positions include Q118, 122–124 (RGR), and K189.

It belongs to the biotin--protein ligase family.

The enzyme catalyses biotin + L-lysyl-[protein] + ATP = N(6)-biotinyl-L-lysyl-[protein] + AMP + diphosphate + H(+). Its function is as follows. Acts both as a biotin--[acetyl-CoA-carboxylase] ligase and a repressor. In Bacillus subtilis (strain 168), this protein is Bifunctional ligase/repressor BirA.